Here is a 1048-residue protein sequence, read N- to C-terminus: Integrin alpha-V (1048 aa).

A signal peptide spans 1-30; sequence MAFPPRRRLRLGPRGLPLLLSGLLLPLCRA. Residues 31–992 are Extracellular-facing; that stretch reads FNLDVESPAE…WGIQPAPMPV (962 aa). FG-GAP repeat units lie at residues 32-98, 109-170, 173-225, 237-291, 292-357, 358-415, and 419-482; these read NLDV…RRCQ, DYAK…VEYA, RSKN…VSKY, QLAT…GKNM, SSLH…GDFQ, TIKL…GLNA, and QILE…VYPS. Residue N74 is glycosylated (N-linked (GlcNAc...) asparagine). 3 disulfide bridges follow: C89–C97, C138–C158, and C172–C185. Ca(2+) is bound by residues D260, N262, D264, I266, and D268. N-linked (GlcNAc...) asparagine glycosylation is found at N290 and N296. 15 residues coordinate Ca(2+): D314, N316, D318, Y320, D322, D379, D381, D383, F385, D387, D443, D445, N447, Y449, and D451. A glycan (N-linked (GlcNAc...) asparagine) is linked at N488. Cystine bridges form between C491–C502 and C508–C565. N-linked (GlcNAc...) asparagine glycosylation is found at N554 and N615. 2 disulfide bridges follow: C626–C632 and C698–C711. Residues N704, N835, N851, and N874 are each glycosylated (N-linked (GlcNAc...) asparagine). Cystine bridges form between C852–C914 and C904–C909. 3 N-linked (GlcNAc...) asparagine glycosylation sites follow: N945, N973, and N980. A helical membrane pass occupies residues 993–1016; sequence PVWVIILAVLAGLLLLAVLVFVMY. Over 1017–1048 the chain is Cytoplasmic; that stretch reads RMGFFKRVRPPQEEQEREQLQPHENGEGNSET. A GFFKR motif motif is present at residues 1019-1023; the sequence is GFFKR. A compositionally biased stretch (basic and acidic residues) spans 1027–1042; it reads PQEEQEREQLQPHENG. The tract at residues 1027 to 1048 is disordered; the sequence is PQEEQEREQLQPHENGEGNSET.

The protein belongs to the integrin alpha chain family. In terms of assembly, heterodimer of an alpha and a beta subunit. The alpha subunit is composed of a heavy and a light chain linked by a disulfide bond. Alpha-V (ITGAV) associates with either beta-1 (ITGB1), beta-3 (ITGB3), beta-5 (ITGB5), beta-6 (ITGB6) or beta-8 (ITGB8). Interacts with RAB25. Interacts with CIB1. Integrins ITGAV:ITGB3 and ITGAV:ITGB5 interact with FBLN5 (via N-terminus). ITGAV:ITGB3 and ITGAV:ITGB5 interact with CCN3. ITGAV:ITGB3 interacts with ADGRA2. ITGAV:ITGB3 interacts with FGF2; it is likely that FGF2 can simultaneously bind ITGAV:ITGB3 and FGF receptors. ITGAV:ITGB3 interacts with SELP (via C-type lectin domain); the interaction mediates cell-cell interaction and adhesion. ITGAV:ITGB3 is found in a ternary complex with CX3CR1 and CX3CL1. ITGAV:ITGB3 is found in a ternary complex with NRG1 and ERBB3. ITGAV:ITGB3 is found in a ternary complex with FGF1 and FGFR1. ITGAV:ITGB3 is found in a ternary complex with IGF1 and IGF1R. ITGAV:ITGB3 interacts with IGF2. ITGAV:ITGB3 and ITGAV:ITGB6 interact with FBN1. ITGAV:ITGB3 interacts with CD9, CD81 and CD151 (via second extracellular domain). ITGAV:ITGB6 interacts with TGFB1. ITGAV:ITGB3 interacts with PTN. Forms a complex with PTPRZ1 and PTN that stimulates endothelial cell migration through ITGB3 'Tyr-773' phosphorylation. Interacts with TM4SF19. (Microbial infection) Alpha-V/beta-6 and alpha-V/beta-3 bind to foot-and-mouth disease virus (FMDV) VP1 protein and acts as a receptor for this virus.

It localises to the cell membrane. It is found in the cell junction. The protein localises to the focal adhesion. Its function is as follows. The alpha-V (ITGAV) integrins are receptors for vitronectin, cytotactin, fibronectin, fibrinogen, laminin, matrix metalloproteinase-2, osteopontin, osteomodulin, prothrombin, thrombospondin, TGFB1 and vWF. They recognize the sequence R-G-D in a wide array of ligands. Alpha-V integrins may play a role in embryo implantation, angiogenesis and wound healing. ITGAV:ITGB3 binds to fractalkine (CX3CL1) and may act as its coreceptor in CX3CR1-dependent fractalkine signaling. ITGAV:ITGB3 binds to NRG1 (via EGF domain) and this binding is essential for NRG1-ERBB signaling. ITGAV:ITGB3 binds to FGF1 and this binding is essential for FGF1 signaling. ITGAV:ITGB3 binds to FGF2 and this binding is essential for FGF2 signaling. ITGAV:ITGB3 binds to IGF1 and this binding is essential for IGF1 signaling. ITGAV:ITGB3 binds to IGF2 and this binding is essential for IGF2 signaling. ITGAV:ITGB3 binds to IL1B and this binding is essential for IL1B signaling. ITGAV:ITGB3 binds to PLA2G2A via a site (site 2) which is distinct from the classical ligand-binding site (site 1) and this induces integrin conformational changes and enhanced ligand binding to site 1. ITGAV:ITGB3 and ITGAV:ITGB6 act as receptors for fibrillin-1 (FBN1) and mediate R-G-D-dependent cell adhesion to FBN1. Integrin alpha-V/beta-6 or alpha-V/beta-8 (ITGAV:ITGB6 or ITGAV:ITGB8) mediates R-G-D-dependent release of transforming growth factor beta-1 (TGF-beta-1) from regulatory Latency-associated peptide (LAP), thereby playing a key role in TGF-beta-1 activation. ITGAV:ITGB3 acts as a receptor for CD40LG. ITGAV:ITGB3 acts as a receptor for IBSP and promotes cell adhesion and migration to IBSP. This chain is Integrin alpha-V (ITGAV), found in Bos taurus (Bovine).